We begin with the raw amino-acid sequence, 123 residues long: Large ribosomal subunit protein bL12 (123 aa).

Belongs to the bacterial ribosomal protein bL12 family. As to quaternary structure, homodimer. Part of the ribosomal stalk of the 50S ribosomal subunit. Forms a multimeric L10(L12)X complex, where L10 forms an elongated spine to which 2 to 4 L12 dimers bind in a sequential fashion. Binds GTP-bound translation factors.

Functionally, forms part of the ribosomal stalk which helps the ribosome interact with GTP-bound translation factors. Is thus essential for accurate translation. The sequence is that of Large ribosomal subunit protein bL12 from Acinetobacter baumannii (strain AB307-0294).